A 126-amino-acid polypeptide reads, in one-letter code: Type II methyltransferase M.HgiGI (126 aa).

Residues 1-126 (MKTIDLFAGC…ARLSKIHQQA (126 aa)) form the SAM-dependent MTase C5-type domain. Residue C75 is part of the active site.

Belongs to the class I-like SAM-binding methyltransferase superfamily. C5-methyltransferase family.

It catalyses the reaction a 2'-deoxycytidine in DNA + S-adenosyl-L-methionine = a 5-methyl-2'-deoxycytidine in DNA + S-adenosyl-L-homocysteine + H(+). Functionally, a methylase, recognizes the double-stranded sequence 5'-GRCGYC-3', methylates C-? on both strands, and protects the DNA from cleavage by the HgiEI endonuclease. The protein is Type II methyltransferase M.HgiGI of Herpetosiphon aurantiacus (Herpetosiphon giganteus).